The following is a 357-amino-acid chain: Spermatogenesis- and oogenesis-specific basic helix-loop-helix-containing protein 1 (357 aa).

Residues 1-14 are compositionally biased toward basic and acidic residues; sequence MASGGHERANEDYR. Residues 1 to 40 form a disordered region; that stretch reads MASGGHERANEDYRVSGITGCSKTPQPETQDSLQTSSQSS. The segment covering 19–31 has biased composition (polar residues); that stretch reads TGCSKTPQPETQD. Residues 54–105 enclose the bHLH domain; that stretch reads PSLRRNVVSERERRRRISLSCEHLRALLPQFDGRREDMASVLEMSVYFLQLA. The tract at residues 145–210 is disordered; the sequence is KPDSGIAKPS…EPESSSLGPG (66 aa). Over residues 200-209 the composition is skewed to low complexity; sequence SEPESSSLGP.

In terms of assembly, forms both hetero- and homodimers with SOHLH2. In males, it is mainly expressed in testis, while in females it is mainly expressed in ovary. In testis, it is exclusively expressed in spermatogonia, with a preference for prespermatogonia and type A spermatogonia. In ovary, it is detected in germ cell cysts, primordial follicles, and primary follicles but is undetectable by the secondary follicle stage (at protein level). Expressed in the majority of spermatogonia in adult animals, but not in the most undifferentiated spermatogonial population.

The protein resides in the cytoplasm. It localises to the nucleus. In terms of biological role, transcription regulator of both male and female germline differentiation. Suppresses genes involved in spermatogonial stem cells maintenance, and induces genes important for spermatogonial differentiation. Coordinates oocyte differentiation without affecting meiosis I. This Mus musculus (Mouse) protein is Spermatogenesis- and oogenesis-specific basic helix-loop-helix-containing protein 1 (Sohlh1).